A 293-amino-acid polypeptide reads, in one-letter code: Glutamyl-Q tRNA(Asp) synthetase (293 aa).

Residues 26–30 (RFAPS) and Asp-62 each bind L-glutamate. The short motif at 29–39 (PSPTGLLHLGN) is the 'HIGH' region element. Residues Cys-118, Cys-120, Tyr-131, and Cys-135 each contribute to the Zn(2+) site. 2 residues coordinate L-glutamate: Tyr-178 and Arg-196. A 'KMSKS' region motif is present at residues 234 to 238 (KLSKR). Position 237 (Lys-237) interacts with ATP.

Belongs to the class-I aminoacyl-tRNA synthetase family. GluQ subfamily. The cofactor is Zn(2+).

In terms of biological role, catalyzes the tRNA-independent activation of glutamate in presence of ATP and the subsequent transfer of glutamate onto a tRNA(Asp). Glutamate is transferred on the 2-amino-5-(4,5-dihydroxy-2-cyclopenten-1-yl) moiety of the queuosine in the wobble position of the QUC anticodon. The polypeptide is Glutamyl-Q tRNA(Asp) synthetase (Synechococcus sp. (strain CC9605)).